The following is a 160-amino-acid chain: uncharacterized protein (160 aa).

Positions Met1–Ala29 are cleaved as a signal peptide.

This is an uncharacterized protein from Sinorhizobium fredii (strain NBRC 101917 / NGR234).